The sequence spans 378 residues: Ribosomal RNA large subunit methyltransferase G (378 aa).

Belongs to the methyltransferase superfamily. RlmG family.

The protein localises to the cytoplasm. The enzyme catalyses guanosine(1835) in 23S rRNA + S-adenosyl-L-methionine = N(2)-methylguanosine(1835) in 23S rRNA + S-adenosyl-L-homocysteine + H(+). In terms of biological role, specifically methylates the guanine in position 1835 (m2G1835) of 23S rRNA. The protein is Ribosomal RNA large subunit methyltransferase G of Shigella dysenteriae serotype 1 (strain Sd197).